The following is a 419-amino-acid chain: Endochitinase 2 (419 aa).

A signal peptide spans 1 to 18; sequence MHHLRALVGVGLAGLAAG. Residues 35–343 form the GH18 domain; it reads AQNVVYWGQN…QQAKSILVNG (309 aa). N153 carries N-linked (GlcNAc...) asparagine glycosylation. E173 (proton donor) is an active-site residue. N-linked (GlcNAc...) asparagine glycans are attached at residues N237 and N256. A disordered region spans residues 343-390; sequence GAPCPSSGPPSSTPATAPAPTATTMPSSTSVSSPTASPTGGTVPQWGQ. The segment covering 355 to 384 has biased composition (low complexity); that stretch reads TPATAPAPTATTMPSSTSVSSPTASPTGGT. A CBM1 domain is found at 383 to 419; the sequence is GTVPQWGQCGGEGYSGPTQCVPPYQCVKQGDWWSSCR.

This sequence belongs to the glycosyl hydrolase 18 family. Chitinase class III subfamily.

The protein localises to the secreted. The catalysed reaction is Random endo-hydrolysis of N-acetyl-beta-D-glucosaminide (1-&gt;4)-beta-linkages in chitin and chitodextrins.. In terms of biological role, secreted chitinase involved in the degradation of chitin, a component of the cell walls of fungi and exoskeletal elements of some animals (including worms and arthropods). Participates in the infection process and directly acts in the penetration process of the host cuticle. This chain is Endochitinase 2 (chi2), found in Metarhizium anisopliae (Entomophthora anisopliae).